Consider the following 1843-residue polypeptide: Xin actin-binding repeat-containing protein 1 (1843 aa).

A compositionally biased stretch (polar residues) spans 1 to 10; it reads MADTQTQVAP. Positions 1 to 48 are disordered; it reads MADTQTQVAPTPTMRMATAEDLPLPPPPALEDLPLPPPKESFSKFHQQ. Residues 1-54 are interaction with VASP; sequence MADTQTQVAPTPTMRMATAEDLPLPPPPALEDLPLPPPKESFSKFHQQRQASEL. A compositionally biased stretch (pro residues) spans 23 to 39; that stretch reads PLPPPPALEDLPLPPPK. 4 Xin repeats span residues 89-104, 121-136, 151-166, and 186-201; these read GDVQ…WRLD, GDVQ…GSFA, GDVR…KPLD, and GDVQ…RPLD. The interval 132–151 is disordered; it reads EGSFANSTDQEPTRPQPGGG. Phosphoserine is present on residues serine 205, serine 208, and serine 213. Xin repeat units lie at residues 226 to 241 and 264 to 279; these read GDVK…EPLC and NAVR…RPLD. Serine 295 carries the phosphoserine modification. Residues 302–317 form a Xin 7 repeat; the sequence is PDVSATRWIFETQPLD. A Phosphoserine modification is found at serine 332. 2 Xin repeats span residues 340 to 355 and 376 to 391; these read PDVQ…RALD and GDVR…KPLD. The segment at 406 to 432 is disordered; the sequence is DPQDGEGHLSSDSSSALPFSQSAPQRD. The span at 415–429 shows a compositional bias: low complexity; sequence SSDSSSALPFSQSAP. The stretch at 436-451 is one Xin 10 repeat; that stretch reads GDVKTFKNLFETLPLD. The interval 455–479 is disordered; that stretch reads QGEVLAHGSPSREEGTDSAGQAQGI. Xin repeat units lie at residues 507-522 and 545-560; these read GDVQ…QPLD and GDVG…QPLE. The interval 531 to 632 is interaction with CTNNB1; it reads IDVVRGITRQ…AQSCTWMFKP (102 aa). Over residues 564–577 the composition is skewed to basic and acidic residues; sequence QREQQERQKEEGKS. Positions 564–591 are disordered; sequence QREQQERQKEEGKSQGDPQPEAPPKGDV. 5 Xin repeats span residues 589–604, 621–636, 654–669, 691–706, and 723–738; these read GDVQ…CPMS, AEAQ…QPVD, GERQ…EPLQ, GQVS…LEAG, and GSVH…CPMG. 5 disordered regions span residues 943 to 999, 1063 to 1205, 1238 to 1277, 1289 to 1471, and 1561 to 1696; these read SLRW…QAIG, AEAQ…MAWG, SGPQ…HRAE, DPLL…QKEL, and MSSL…DVSV. Polar residues-rich tracts occupy residues 1064 to 1073 and 1080 to 1089; these read EAQSLHQQVL and PTPTATSNPI. Residues 1294 to 1311 show a composition bias toward polar residues; that stretch reads SHSSPAGQRTPGGSQTKT. Basic and acidic residues predominate over residues 1357 to 1368; that stretch reads GQREHQRGERDT. Over residues 1393-1424 the composition is skewed to polar residues; sequence GHSQPSLQHGLSTTAPRPTKNQATGSNAQSSE. Residues 1462-1490 are a coiled coil; that stretch reads DSLQRNQKELQGLLNQVQALEKEAASSVD. Composition is skewed to polar residues over residues 1588–1600 and 1663–1679; these read VTVS…SGSG and SRDS…QSAT. The segment at 1685–1843 is interaction with FLNC; the sequence is TPSFKGNPDV…SCSYSQPAAQ (159 aa).

Belongs to the Xin family. Interacts (via N-terminus) with CTTN; the interaction promotes CTTN localization to intercalated disks in cardiomyocytes. Interacts with CTNNB1. Interacts with FLNC and VASP. Interacts with F-actin. In terms of tissue distribution, expressed in skeletal muscle at areas of Z-disk disruption in a longitudinal pattern spanning one or more sarcomeres (at protein level). Expressed in the heart (at protein level). As to expression, expressed in the heart.

Its subcellular location is the cell junction. The protein resides in the adherens junction. The protein localises to the desmosome. Its function is as follows. Protects actin filaments from depolymerization. Required for correct cardiac intercalated disk ultrastructure via maintenance of cell-cell adhesion stability, and as a result maintains cardiac organ morphology, conductance and heart beat rhythm. Required for development of normal skeletal muscle morphology and muscle fiber type composition. Plays a role in regulating muscle satellite cell activation and survival, as a result promotes muscle fiber recovery from injury and fatigue. In Homo sapiens (Human), this protein is Xin actin-binding repeat-containing protein 1.